The sequence spans 330 residues: Zinc finger protein Gfi-1b (330 aa).

An SNAG domain region spans residues 1-20; the sequence is MPRSFLVKSKKAHTYHQPRV. The interval 1-42 is disordered; that stretch reads MPRSFLVKSKKAHTYHQPRVQEDEPLWPPALTPVPRDQAPSN. The residue at position 8 (K8) is an N6,N6-dimethyllysine. The interaction with ARIH2 stretch occupies residues 91 to 330; the sequence is GDSPLSDSPP…RHRESQHNLK (240 aa). 6 consecutive C2H2-type zinc fingers follow at residues 163 to 186, 192 to 214, 220 to 242, 248 to 270, 276 to 298, and 304 to 327; these read YHCVKCNKVFSTPHGLEVHVRRSH, FACDICGKTFGHAVSLEQHTHVH, FECRMCGKAFKRSSTLSTHLLIH, YPCQFCGKRFHQKSDMKKHTYIH, HKCQVCGKAFSQSSNLITHSRKH, and FSCELCTKGFQRKVDLRRHRESQH. The mediates interaction with GATA1 stretch occupies residues 164–330; sequence HCVKCNKVFS…RHRESQHNLK (167 aa).

Component of a RCOR-GFI-KDM1A-HDAC complex. Interacts directly with RCOR1, KDM1A and HDAC2. Forms a complex with GATA1. Interacts with histone methyltransferases EHMT2 and SUV39H1. Interacts with ARIH2 (via RING-type 2). Interacts with RUNX1T1. Post-translationally, methylation at Lys-8 in the SNAG domain seems required for the recruitment of the corepressor complex. Expressed in bone marrow and fetal liver, but also detectable in fetal spleen, fetal thymus, and testes. Detected in hematopoietic stem cells, erythroblasts, and megakaryocytes. Overexpressed in bone marrow of patients with erythroleukemia and megakaryocytic leukemia as well as in their corresponding leukemic cell lines, and markedly repressed in severe aplastic anemia (SAA).

It is found in the nucleus. Essential proto-oncogenic transcriptional regulator necessary for development and differentiation of erythroid and megakaryocytic lineages. Component of a RCOR-GFI-KDM1A-HDAC complex that suppresses, via histone deacetylase (HDAC) recruitment, a number of genes implicated in multilineage blood cell development and controls hematopoietic differentiation. Transcriptional repressor or activator depending on both promoter and cell type context; represses promoter activity of SOCS1 and SOCS3 and thus, may regulate cytokine signaling pathways. Cooperates with GATA1 to repress target gene transcription, such as the apoptosis regulator BCL2L1; GFI1B silencing in leukemic cell lines markedly increase apoptosis rate. Inhibits down-regulation of MYC and MYB as well as the cyclin-dependent kinase inhibitor CDKN1A/P21WAF1 in IL6-treated myelomonocytic cells. Represses expression of GATA3 in T-cell lymphomas and inhibits GATA1-mediated transcription; as GATA1 also mediates erythroid GFI1B transcription, both GATA1 and GFI1B participate in a feedback regulatory pathway controlling the expression of GFI1B gene in erythroid cells. Suppresses GATA1-mediated stimulation of GFI1B promoter through protein interaction. Binds to gamma-satellite DNA and to its own promoter, auto-repressing its own expression. Alters histone methylation by recruiting histone methyltransferase to target genes promoters. Plays a role in heterochromatin formation. The polypeptide is Zinc finger protein Gfi-1b (GFI1B) (Homo sapiens (Human)).